We begin with the raw amino-acid sequence, 306 residues long: Recombination-associated protein RdgC (306 aa).

This sequence belongs to the RdgC family.

It is found in the cytoplasm. Its subcellular location is the nucleoid. May be involved in recombination. The chain is Recombination-associated protein RdgC from Pseudomonas putida (strain ATCC 47054 / DSM 6125 / CFBP 8728 / NCIMB 11950 / KT2440).